Here is a 273-residue protein sequence, read N- to C-terminus: 3-methyl-2-oxobutanoate hydroxymethyltransferase (273 aa).

Mg(2+)-binding residues include D53 and D92. 3-methyl-2-oxobutanoate is bound by residues 53 to 54, D92, and K120; that span reads DS. E122 serves as a coordination point for Mg(2+). Catalysis depends on E189, which acts as the Proton acceptor.

This sequence belongs to the PanB family. Homodecamer; pentamer of dimers. Requires Mg(2+) as cofactor.

The protein resides in the cytoplasm. The enzyme catalyses 3-methyl-2-oxobutanoate + (6R)-5,10-methylene-5,6,7,8-tetrahydrofolate + H2O = 2-dehydropantoate + (6S)-5,6,7,8-tetrahydrofolate. It participates in cofactor biosynthesis; (R)-pantothenate biosynthesis; (R)-pantoate from 3-methyl-2-oxobutanoate: step 1/2. In terms of biological role, catalyzes the reversible reaction in which hydroxymethyl group from 5,10-methylenetetrahydrofolate is transferred onto alpha-ketoisovalerate to form ketopantoate. In Cupriavidus taiwanensis (strain DSM 17343 / BCRC 17206 / CCUG 44338 / CIP 107171 / LMG 19424 / R1) (Ralstonia taiwanensis (strain LMG 19424)), this protein is 3-methyl-2-oxobutanoate hydroxymethyltransferase.